The sequence spans 162 residues: Sec-independent protein translocase protein TatB (162 aa).

A helical membrane pass occupies residues 1–21 (MFDIGFLEIIVIMVIALIVIG). The interval 86–162 (IQDEFGIDQE…ESTPESSNKS (77 aa)) is disordered. Residues 108-117 (FSGTQFNKAP) show a composition bias toward polar residues. The segment covering 123-135 (PTTEESPSSTPET) has biased composition (low complexity). Over residues 147–162 (DVSAPSESTPESSNKS) the composition is skewed to polar residues.

This sequence belongs to the TatB family. As to quaternary structure, the Tat system comprises two distinct complexes: a TatABC complex, containing multiple copies of TatA, TatB and TatC subunits, and a separate TatA complex, containing only TatA subunits. Substrates initially bind to the TatABC complex, which probably triggers association of the separate TatA complex to form the active translocon.

Its subcellular location is the cell inner membrane. Functionally, part of the twin-arginine translocation (Tat) system that transports large folded proteins containing a characteristic twin-arginine motif in their signal peptide across membranes. Together with TatC, TatB is part of a receptor directly interacting with Tat signal peptides. TatB may form an oligomeric binding site that transiently accommodates folded Tat precursor proteins before their translocation. The chain is Sec-independent protein translocase protein TatB from Hydrogenovibrio crunogenus (strain DSM 25203 / XCL-2) (Thiomicrospira crunogena).